The sequence spans 248 residues: Fasciclin-like arabinogalactan protein 19 (248 aa).

Positions 1–29 (MAKISSASCFRAIFLGALIILCLPHPSTG) are cleaved as a signal peptide. The FAS1 domain occupies 35-166 (LERAIAILRV…IAVHGLADLL (132 aa)). 2 N-linked (GlcNAc...) asparagine glycosylation sites follow: Asn114 and Asn136. Over residues 213-226 (SPSVEEVSPSPSWG) the composition is skewed to low complexity. Residues 213 to 248 (SPSVEEVSPSPSWGEGEEDFIVGDEGGPLDGRNNGF) are disordered.

It belongs to the fasciclin-like AGP family.

The protein resides in the secreted. In terms of biological role, may be a cell surface adhesion protein. In Arabidopsis thaliana (Mouse-ear cress), this protein is Fasciclin-like arabinogalactan protein 19 (FLA19).